The primary structure comprises 166 residues: Protein adg1 (166 aa).

Positions 1–22 (MFLRSIFQTLCAVSFLAGSVFA) are cleaved as a signal peptide.

It localises to the endoplasmic reticulum. This is Protein adg1 (adg1) from Schizosaccharomyces pombe (strain 972 / ATCC 24843) (Fission yeast).